We begin with the raw amino-acid sequence, 184 residues long: Endothelial cell-specific molecule 1 (184 aa).

A signal peptide spans M1 to S21. The IGFBP N-terminal domain maps to Y24–C102. 6 cysteine pairs are disulfide-bonded: C28/C51, C32/C53, C37/C54, C43/C57, C65/C83, and C77/C99. Residues R145–R184 form a disordered region. A compositionally biased stretch (basic and acidic residues) spans T151 to A172. A glycan (O-linked (Xyl...) (chondroitin sulfate) serine) is linked at S157.

In terms of processing, O-glycosylated; contains chondroitin sulfate and dermatan sulfate. Pineal gland specific.

The protein localises to the secreted. In terms of biological role, involved in angiogenesis; promotes angiogenic sprouting. May have potent implications in lung endothelial cell-leukocyte interactions. The protein is Endothelial cell-specific molecule 1 (Esm1) of Rattus norvegicus (Rat).